A 114-amino-acid chain; its full sequence is Ribonuclease P protein component (114 aa).

Belongs to the RnpA family. As to quaternary structure, consists of a catalytic RNA component (M1 or rnpB) and a protein subunit.

The enzyme catalyses Endonucleolytic cleavage of RNA, removing 5'-extranucleotides from tRNA precursor.. In terms of biological role, RNaseP catalyzes the removal of the 5'-leader sequence from pre-tRNA to produce the mature 5'-terminus. It can also cleave other RNA substrates such as 4.5S RNA. The protein component plays an auxiliary but essential role in vivo by binding to the 5'-leader sequence and broadening the substrate specificity of the ribozyme. This Borrelia duttonii (strain Ly) protein is Ribonuclease P protein component.